A 200-amino-acid chain; its full sequence is LHFPL tetraspan subfamily member 6 protein (200 aa).

A signal peptide spans 1–23 (MASSLTCTGVIWALLSFLSAATS). Transmembrane regions (helical) follow at residues 84–104 (ICTI…LTAL), 123–143 (GIQF…PLGW), and 166–186 (IGWA…LCTW).

It belongs to the LHFP family.

The protein localises to the membrane. This Mus musculus (Mouse) protein is LHFPL tetraspan subfamily member 6 protein.